We begin with the raw amino-acid sequence, 287 residues long: 4-hydroxybenzoate octaprenyltransferase (287 aa).

7 helical membrane passes run 30 to 50, 92 to 112, 133 to 153, 158 to 178, 207 to 227, 232 to 252, and 266 to 286; these read ALWIASDGHPAPSLVVIFALG, IAIAVGLALVSFLLILPLNGL, FFAIPQAYLGIAFGFGIPMAF, DTVPMIAWAMLAANVFWSVAY, VLAIMLCYAAMLGIYVWLGAA, WPYWAGWAAAAGCSIYHYTLI, and HNNWLGGVLFAGIAAHYALAV.

This sequence belongs to the UbiA prenyltransferase family. Mg(2+) serves as cofactor.

It is found in the cell inner membrane. The enzyme catalyses all-trans-octaprenyl diphosphate + 4-hydroxybenzoate = 4-hydroxy-3-(all-trans-octaprenyl)benzoate + diphosphate. It functions in the pathway cofactor biosynthesis; ubiquinone biosynthesis. In terms of biological role, catalyzes the prenylation of para-hydroxybenzoate (PHB) with an all-trans polyprenyl group. Mediates the second step in the final reaction sequence of ubiquinone-8 (UQ-8) biosynthesis, which is the condensation of the polyisoprenoid side chain with PHB, generating the first membrane-bound Q intermediate 3-octaprenyl-4-hydroxybenzoate. This is 4-hydroxybenzoate octaprenyltransferase from Burkholderia mallei (strain NCTC 10247).